Here is a 126-residue protein sequence, read N- to C-terminus: Holo-[acyl-carrier-protein] synthase (126 aa).

Mg(2+) is bound by residues Asp-9 and Glu-58.

Belongs to the P-Pant transferase superfamily. AcpS family. In terms of assembly, homodimer. Requires Mg(2+) as cofactor.

The protein resides in the cytoplasm. It catalyses the reaction apo-[ACP] + CoA = holo-[ACP] + adenosine 3',5'-bisphosphate + H(+). In terms of biological role, transfers the 4'-phosphopantetheine moiety from coenzyme A to the 'Ser-36' of acyl-carrier-protein. In Escherichia coli O157:H7, this protein is Holo-[acyl-carrier-protein] synthase.